The sequence spans 179 residues: Large ribosomal subunit protein uL5 (179 aa).

Belongs to the universal ribosomal protein uL5 family. As to quaternary structure, part of the 50S ribosomal subunit; part of the 5S rRNA/L5/L18/L25 subcomplex. Contacts the 5S rRNA and the P site tRNA. Forms a bridge to the 30S subunit in the 70S ribosome.

Functionally, this is one of the proteins that bind and probably mediate the attachment of the 5S RNA into the large ribosomal subunit, where it forms part of the central protuberance. In the 70S ribosome it contacts protein S13 of the 30S subunit (bridge B1b), connecting the 2 subunits; this bridge is implicated in subunit movement. Contacts the P site tRNA; the 5S rRNA and some of its associated proteins might help stabilize positioning of ribosome-bound tRNAs. This Cronobacter sakazakii (strain ATCC BAA-894) (Enterobacter sakazakii) protein is Large ribosomal subunit protein uL5.